The following is a 339-amino-acid chain: Transcription initiation factor IIB (339 aa).

A TFIIB-type zinc finger spans residues 39–70 (EELICPMCGSKNIIKDYERAEIVCETCGCVLQ). C43, C46, C62, and C65 together coordinate Zn(2+). Tandem repeats lie at residues 156 to 239 (SELD…SREL) and 250 to 331 (DYVP…ELTE).

This sequence belongs to the TFIIB family.

In terms of biological role, stabilizes TBP binding to an archaeal box-A promoter. Also responsible for recruiting RNA polymerase II to the pre-initiation complex (DNA-TBP-TFIIB). The chain is Transcription initiation factor IIB from Methanothermococcus thermolithotrophicus (Methanococcus thermolithotrophicus).